A 726-amino-acid chain; its full sequence is Putative RNA polymerase II subunit B1 CTD phosphatase RPAP2 homolog (726 aa).

The RTR1-type zinc finger occupies 43–131 (AAASLLSGPD…LPPDRPFGVS (89 aa)). Residues cysteine 66, cysteine 71, cysteine 107, and cysteine 111 each contribute to the Zn(2+) site. Basic and acidic residues predominate over residues 209–218 (VGGPKKEAKQ). 2 disordered regions span residues 209-242 (VGGP…SGES) and 294-323 (KKDK…GRDG). The span at 220 to 241 (DACSAEQSSNINVDSRNASSGE) shows a compositional bias: polar residues.

It belongs to the RPAP2 family.

Its subcellular location is the nucleus. The catalysed reaction is O-phospho-L-seryl-[protein] + H2O = L-seryl-[protein] + phosphate. The enzyme catalyses O-phospho-L-threonyl-[protein] + H2O = L-threonyl-[protein] + phosphate. Putative RNA polymerase II subunit B1 C-terminal domain (CTD) phosphatase involved in RNA polymerase II transcription regulation. The polypeptide is Putative RNA polymerase II subunit B1 CTD phosphatase RPAP2 homolog (Oryza sativa subsp. japonica (Rice)).